The sequence spans 505 residues: Tyrosine-protein kinase FRK (505 aa).

2 positions are modified to phosphoserine: S37 and S40. Positions 42-110 constitute an SH3 domain; it reads RHGHYFVALF…PSNYVAEDRS (69 aa). The 93-residue stretch at 116–208 folds into the SH2 domain; that stretch reads WFFGAIGRSD…GLCVKLGKPC (93 aa). T178 carries the post-translational modification Phosphothreonine. One can recognise a Protein kinase domain in the interval 234–491; it reads IQLLKRLGSG…TLRWKLEDYF (258 aa). ATP is bound by residues 240 to 248 and K262; that span reads LGSGQFGEV. Catalysis depends on D354, which acts as the Proton acceptor. Y387 carries the phosphotyrosine; by autocatalysis modification.

This sequence belongs to the protein kinase superfamily. Tyr protein kinase family. SRC subfamily. Interacts (via the SH3-domain) with PTEN. Interacts with RB1. As to expression, predominantly expressed in epithelial derived cell lines and tissues, especially normal liver, kidney, breast and colon.

Its subcellular location is the cytoplasm. The protein localises to the nucleus. It catalyses the reaction L-tyrosyl-[protein] + ATP = O-phospho-L-tyrosyl-[protein] + ADP + H(+). Its function is as follows. Non-receptor tyrosine-protein kinase that negatively regulates cell proliferation. Positively regulates PTEN protein stability through phosphorylation of PTEN on 'Tyr-336', which in turn prevents its ubiquitination and degradation, possibly by reducing its binding to NEDD4. May function as a tumor suppressor. The sequence is that of Tyrosine-protein kinase FRK (FRK) from Homo sapiens (Human).